A 550-amino-acid polypeptide reads, in one-letter code: Hydroxylamine reductase (550 aa).

4 residues coordinate [2Fe-2S] cluster: Cys-4, Cys-7, Cys-19, and Cys-26. Residues His-249, Glu-273, Cys-317, Cys-405, Cys-433, Cys-458, Glu-492, and Lys-494 each coordinate hybrid [4Fe-2O-2S] cluster. Cys-405 is modified (cysteine persulfide).

This sequence belongs to the HCP family. [2Fe-2S] cluster serves as cofactor. Requires hybrid [4Fe-2O-2S] cluster as cofactor.

The protein resides in the cytoplasm. It catalyses the reaction A + NH4(+) + H2O = hydroxylamine + AH2 + H(+). Functionally, catalyzes the reduction of hydroxylamine to form NH(3) and H(2)O. This chain is Hydroxylamine reductase, found in Aeromonas salmonicida (strain A449).